The following is a 352-amino-acid chain: N-acetyl-gamma-glutamyl-phosphate reductase 1 (352 aa).

The protein belongs to the NAGSA dehydrogenase family. Type 1 subfamily.

The protein localises to the cytoplasm. It carries out the reaction N-acetyl-L-glutamate 5-semialdehyde + phosphate + NADP(+) = N-acetyl-L-glutamyl 5-phosphate + NADPH + H(+). Its pathway is amino-acid biosynthesis; L-arginine biosynthesis; N(2)-acetyl-L-ornithine from L-glutamate: step 3/4. Its function is as follows. Catalyzes the NADPH-dependent reduction of N-acetyl-5-glutamyl phosphate to yield N-acetyl-L-glutamate 5-semialdehyde. In Nostoc sp. (strain PCC 7120 / SAG 25.82 / UTEX 2576), this protein is N-acetyl-gamma-glutamyl-phosphate reductase 1.